Here is a 1223-residue protein sequence, read N- to C-terminus: DNA-directed RNA polymerase II subunit RPB2 (1223 aa).

Residues 1 to 20 form a disordered region; the sequence is MSADNEDYYDEDPYGFEEEN. D836 is a Mg(2+) binding site. Residues C1162, C1165, C1181, and C1184 each coordinate Zn(2+). The C4-type zinc-finger motif lies at 1162-1184; that stretch reads CGICGLMSVIAKLNHNQFECKGC.

It belongs to the RNA polymerase beta chain family. Component of the RNA polymerase II (Pol II) complex consisting of 12 subunits.

It is found in the nucleus. The enzyme catalyses RNA(n) + a ribonucleoside 5'-triphosphate = RNA(n+1) + diphosphate. Functionally, DNA-dependent RNA polymerase catalyzes the transcription of DNA into RNA using the four ribonucleoside triphosphates as substrates. Second largest component of RNA polymerase II which synthesizes mRNA precursors and many functional non-coding RNAs. Proposed to contribute to the polymerase catalytic activity and forms the polymerase active center together with the largest subunit. Pol II is the central component of the basal RNA polymerase II transcription machinery. It is composed of mobile elements that move relative to each other. RPB2 is part of the core element with the central large cleft, the clamp element that moves to open and close the cleft and the jaws that are thought to grab the incoming DNA template. The sequence is that of DNA-directed RNA polymerase II subunit RPB2 (RPB2) from Candida glabrata (strain ATCC 2001 / BCRC 20586 / JCM 3761 / NBRC 0622 / NRRL Y-65 / CBS 138) (Yeast).